The primary structure comprises 513 residues: ATP synthase subunit alpha (513 aa).

ATP is bound at residue 169–176 (GDRQCGKT).

This sequence belongs to the ATPase alpha/beta chains family. As to quaternary structure, F-type ATPases have 2 components, CF(1) - the catalytic core - and CF(0) - the membrane proton channel. CF(1) has five subunits: alpha(3), beta(3), gamma(1), delta(1), epsilon(1). CF(0) has three main subunits: a(1), b(2) and c(9-12). The alpha and beta chains form an alternating ring which encloses part of the gamma chain. CF(1) is attached to CF(0) by a central stalk formed by the gamma and epsilon chains, while a peripheral stalk is formed by the delta and b chains.

It localises to the cell inner membrane. It catalyses the reaction ATP + H2O + 4 H(+)(in) = ADP + phosphate + 5 H(+)(out). Its function is as follows. Produces ATP from ADP in the presence of a proton gradient across the membrane. The alpha chain is a regulatory subunit. The polypeptide is ATP synthase subunit alpha (Alteromonas mediterranea (strain DSM 17117 / CIP 110805 / LMG 28347 / Deep ecotype)).